We begin with the raw amino-acid sequence, 198 residues long: Protein GrpE (198 aa).

This sequence belongs to the GrpE family. In terms of assembly, homodimer.

The protein resides in the cytoplasm. Participates actively in the response to hyperosmotic and heat shock by preventing the aggregation of stress-denatured proteins, in association with DnaK and GrpE. It is the nucleotide exchange factor for DnaK and may function as a thermosensor. Unfolded proteins bind initially to DnaJ; upon interaction with the DnaJ-bound protein, DnaK hydrolyzes its bound ATP, resulting in the formation of a stable complex. GrpE releases ADP from DnaK; ATP binding to DnaK triggers the release of the substrate protein, thus completing the reaction cycle. Several rounds of ATP-dependent interactions between DnaJ, DnaK and GrpE are required for fully efficient folding. The sequence is that of Protein GrpE from Baumannia cicadellinicola subsp. Homalodisca coagulata.